A 551-amino-acid chain; its full sequence is Eukaryotic translation initiation factor 3 subunit D-2 (551 aa).

The interval 105–152 is disordered; it reads NNVRARGRTGRGSQAVGGPGGPAAGGSTANSTKYGKGRNTRNTQNVGR. A compositionally biased stretch (gly residues) spans 119–128; sequence AVGGPGGPAA. The segment at 290 to 304 is RNA gate; that stretch reads QFDLLTVNETSLEPP.

The protein belongs to the eIF-3 subunit D family. Component of the eukaryotic translation initiation factor 3 (eIF-3) complex. The eIF-3 complex interacts with pix.

It localises to the cytoplasm. Its function is as follows. mRNA cap-binding component of the eukaryotic translation initiation factor 3 (eIF-3) complex, which is involved in protein synthesis of a specialized repertoire of mRNAs and, together with other initiation factors, stimulates binding of mRNA and methionyl-tRNAi to the 40S ribosome. The eIF-3 complex specifically targets and initiates translation of a subset of mRNAs involved in cell proliferation. In the eIF-3 complex, eif3d specifically recognizes and binds the 7-methylguanosine cap of a subset of mRNAs. The protein is Eukaryotic translation initiation factor 3 subunit D-2 of Drosophila erecta (Fruit fly).